Consider the following 706-residue polypeptide: Polyribonucleotide nucleotidyltransferase (706 aa).

Residues D487 and D493 each contribute to the Mg(2+) site. Residues 554–613 enclose the KH domain; that stretch reads PRIHTMKISSDKIKDVIGKGGAVIRALCEETGTTIEIEDDGTIKIAATEGAAAKEAIRRI. Positions 623–691 constitute an S1 motif domain; that stretch reads GRIYQGKVAR…RQGRVRLSMK (69 aa).

It belongs to the polyribonucleotide nucleotidyltransferase family. As to quaternary structure, component of the RNA degradosome, which is a multiprotein complex involved in RNA processing and mRNA degradation. Mg(2+) serves as cofactor.

It localises to the cytoplasm. It carries out the reaction RNA(n+1) + phosphate = RNA(n) + a ribonucleoside 5'-diphosphate. Involved in mRNA degradation. Catalyzes the phosphorolysis of single-stranded polyribonucleotides processively in the 3'- to 5'-direction. The sequence is that of Polyribonucleotide nucleotidyltransferase from Vibrio atlanticus (strain LGP32) (Vibrio splendidus (strain Mel32)).